The following is an 82-amino-acid chain: UPF0213 protein MW0443 (82 aa).

In terms of domain architecture, GIY-YIG spans 2–77 (DSHFVYIVKC…KTYTRQKKLR (76 aa)).

The protein belongs to the UPF0213 family.

This Staphylococcus aureus (strain MW2) protein is UPF0213 protein MW0443.